A 349-amino-acid chain; its full sequence is Protein-glutamate methylesterase/protein-glutamine glutaminase 1 (349 aa).

Residues 4 to 119 enclose the Response regulatory domain; that stretch reads RILVVDDSAV…KGFLEDSARR (116 aa). Position 53 is a 4-aspartylphosphate (aspartate 53). Positions 159–349 constitute a CheB-type methylesterase domain; the sequence is PRAGRAELVV…VASAVLAWAR (191 aa). Residues serine 172, histidine 198, and aspartate 293 contribute to the active site.

It belongs to the CheB family. Phosphorylated by CheA. Phosphorylation of the N-terminal regulatory domain activates the methylesterase activity.

Its subcellular location is the cytoplasm. It carries out the reaction [protein]-L-glutamate 5-O-methyl ester + H2O = L-glutamyl-[protein] + methanol + H(+). The enzyme catalyses L-glutaminyl-[protein] + H2O = L-glutamyl-[protein] + NH4(+). Functionally, involved in chemotaxis. Part of a chemotaxis signal transduction system that modulates chemotaxis in response to various stimuli. Catalyzes the demethylation of specific methylglutamate residues introduced into the chemoreceptors (methyl-accepting chemotaxis proteins or MCP) by CheR. Also mediates the irreversible deamidation of specific glutamine residues to glutamic acid. The chain is Protein-glutamate methylesterase/protein-glutamine glutaminase 1 from Anaeromyxobacter dehalogenans (strain 2CP-C).